The primary structure comprises 127 residues: Major sperm protein isoform beta (127 aa).

At A2 the chain carries N-acetylalanine. The 118-residue stretch at 9–126 (DINTQPGSKI…RRKNLPIEYN (118 aa)) folds into the MSP domain.

As to quaternary structure, forms filaments 10 nm wide, with a characteristic substructure repeating axially at 9 nm. In terms of tissue distribution, sperm.

The protein localises to the cell projection. It is found in the pseudopodium. Its subcellular location is the cytoplasm. It localises to the cytoskeleton. Central component in molecular interactions underlying sperm crawling. Forms an extensive filament system that extends from sperm villipoda, along the leading edge of the pseudopod. The protein is Major sperm protein isoform beta of Ascaris suum (Pig roundworm).